The chain runs to 431 residues: Mitochondrial inner membrane protein OXA1-like (431 aa).

A mitochondrion-targeting transit peptide spans 1-22; it reads MATCLRGITKRVNLLQRRVYPS. The next 5 helical transmembrane spans lie at 119-139, 155-175, 227-247, 269-289, and 312-332; these read VVPA…PVAA, WWAS…PILL, FTPL…FFAI, TTTD…LIMV, and IIAF…FCYW. A disordered region spans residues 362-414; it reads NSSTRQPSPSSPLPFSFAEPKDQSVVAQEKPPMSSESSSSVPDRRISRSSVLN. The span at 392-402 shows a compositional bias: low complexity; sequence PPMSSESSSSV.

It belongs to the OXA1/ALB3/YidC (TC 2.A.9.2) family.

The protein localises to the mitochondrion inner membrane. In terms of biological role, probably required for the insertion of integral membrane proteins into the mitochondrial inner membrane. May participate in the activity and assembly of cytochrome oxidase. The chain is Mitochondrial inner membrane protein OXA1-like (OXA1L) from Arabidopsis thaliana (Mouse-ear cress).